The sequence spans 336 residues: G patch domain and ankyrin repeat-containing protein 1 homolog (336 aa).

ANK repeat units lie at residues 123–152 and 156–185; these read FGWT…QVET and SGNT…LEET. Positions 240 to 286 constitute a G-patch domain; that stretch reads AKNRGLQLMVKQGWDQEHGLGPSQSGRLYPVKTVLRKQRTGLGIEQQ.

In Drosophila melanogaster (Fruit fly), this protein is G patch domain and ankyrin repeat-containing protein 1 homolog.